Here is a 426-residue protein sequence, read N- to C-terminus: Glutamyl-tRNA(Gln) amidotransferase subunit D (426 aa).

An Asparaginase/glutaminase domain is found at 82–413 (KNISILSTGG…KDAKKLICKN (332 aa)). Active-site residues include Thr92, Thr168, Asp169, and Lys245.

Belongs to the asparaginase 1 family. GatD subfamily. In terms of assembly, heterodimer of GatD and GatE.

It catalyses the reaction L-glutamyl-tRNA(Gln) + L-glutamine + ATP + H2O = L-glutaminyl-tRNA(Gln) + L-glutamate + ADP + phosphate + H(+). Functionally, allows the formation of correctly charged Gln-tRNA(Gln) through the transamidation of misacylated Glu-tRNA(Gln) in organisms which lack glutaminyl-tRNA synthetase. The reaction takes place in the presence of glutamine and ATP through an activated gamma-phospho-Glu-tRNA(Gln). The GatDE system is specific for glutamate and does not act on aspartate. The sequence is that of Glutamyl-tRNA(Gln) amidotransferase subunit D from Methanococcus vannielii (strain ATCC 35089 / DSM 1224 / JCM 13029 / OCM 148 / SB).